The primary structure comprises 359 residues: Guanine nucleotide-binding protein alpha-4 subunit (359 aa).

A lipid anchor (N-myristoyl glycine) is attached at glycine 2. Residue cysteine 3 is the site of S-palmitoyl cysteine attachment. In terms of domain architecture, G-alpha spans 31 to 359 (TEVKLLLLGA…RYNLKDCGLF (329 aa)). The tract at residues 34 to 47 (KLLLLGAGESGKST) is G1 motif. GTP contacts are provided by residues 39–46 (GAGESGKS), 178–184 (LRARVKS), 203–207 (DVGGQ), 272–275 (NKMD), and alanine 331. Residue serine 46 coordinates Mg(2+). The interval 176–184 (DILRARVKS) is G2 motif. The interval 199–208 (FRMFDVGGQR) is G3 motif. A G4 motif region spans residues 268–275 (ILFLNKMD). The interval 329–334 (TCATDT) is G5 motif.

Belongs to the G-alpha family. G(i/o/t/z) subfamily. In terms of assembly, g proteins are composed of 3 units; alpha, beta and gamma. The alpha chain contains the guanine nucleotide binding site.

In terms of biological role, guanine nucleotide-binding proteins (G proteins) are involved as modulators or transducers in various transmembrane signaling systems. The sequence is that of Guanine nucleotide-binding protein alpha-4 subunit (gpa-4) from Caenorhabditis briggsae.